An 806-amino-acid polypeptide reads, in one-letter code: SH3-containing GRB2-like protein 3-interacting protein 1 (806 aa).

Disordered regions lie at residues 1-115 (MMEG…ESHK) and 142-278 (SIGN…QAAT). Composition is skewed to basic and acidic residues over residues 16–32 (RKKEKDTDSTGSPDRDG) and 40–54 (PPYHSKAECAREGGK). Ser78, Ser104, Ser105, Ser107, Ser149, Ser151, Ser156, and Ser169 each carry phosphoserine. Phosphothreonine is present on residues Thr180 and Thr182. A phosphoserine mark is found at Ser236 and Phe243. Positions 245–260 (TGTPPPLPPKTVPATP) are enriched in pro residues. A phosphothreonine mark is found at Thr247 and Thr259. Phosphoserine is present on residues Ser265, Asp274, Ser287, Ser289, Ser300, Ser316, and Ser319. Positions 265-276 (SPLTVATGNDQA) are enriched in polar residues. Over residues 315–324 (FSDASPEHVT) the composition is skewed to basic and acidic residues. The segment at 315 to 533 (FSDASPEHVT…SRGPSPLTMG (219 aa)) is disordered. Phosphothreonine occurs at positions 324, 328, and 335. Positions 335 to 345 (TPPAASDIPAD) are enriched in low complexity. Residue Ala338 is modified to Phosphoserine. The span at 346–369 (SPAPAPPGPTGSAGPPGPPGPRHV) shows a compositional bias: pro residues. The residue at position 371 (Ser371) is a Phosphoserine. A compositionally biased stretch (basic and acidic residues) spans 377-392 (EVQKKVAEQTFIKDDY). Ser398 bears the Phosphoserine mark. Thr409 is subject to Phosphothreonine. The segment covering 436–453 (TSGASSPARPATPLVPCS) has biased composition (low complexity). The span at 454–473 (TTPPPPPPRPPSRPKLPPGK) shows a compositional bias: pro residues. Composition is skewed to low complexity over residues 480 to 490 (SRPFSPPIHSS) and 497 to 520 (PLARAESTSSISSTNSLSAATTPT). Ser484, Ser505, and Gly533 each carry phosphoserine. Positions 537–805 (TLPVAAAFTE…RFAAGKYLAD (269 aa)) constitute an MHD domain. 4 interaction with DPF motifs-containing proteins regions span residues 539-545 (PVAAAFT), 571-573 (SFP), 645-648 (TYYN), and 791-796 (SLIKKR). The necessary and sufficient to mediate interaction with CANX stretch occupies residues 627–806 (MPNLMTHLKK…FAAGKYLADN (180 aa)).

In terms of assembly, interacts with proteins essential or regulating the formation of functional clathrin-coated pits. Interacts with CANX. Interacts with AP2A1. Interacts with EPS15. Interacts with SH3GL3. Interacts with AMPH. Interacts with ITSN1 (via SH3 domains). Interacts with and REPS1. As to expression, detected in brain, spinal cord and cerebellum.

It localises to the membrane. The protein resides in the clathrin-coated pit. Functionally, may function in clathrin-mediated endocytosis. Has both a membrane binding/tubulating activity and the ability to recruit proteins essential to the formation of functional clathrin-coated pits. Has a preference for membranes enriched in phosphatidylserine and phosphoinositides and is required for the endocytosis of the transferrin receptor. May also bind tubulin. May play a role in the regulation of energy homeostasis. In Mus musculus (Mouse), this protein is SH3-containing GRB2-like protein 3-interacting protein 1 (Sgip1).